The chain runs to 297 residues: Ribosome production factor 2 homolog (297 aa).

The Brix domain maps to 28–232 (KKALFCRGAK…VMRKKLADDA (205 aa)).

Belongs to the RPF2 family.

The protein resides in the nucleus. The protein localises to the nucleolus. The sequence is that of Ribosome production factor 2 homolog from Caenorhabditis elegans.